We begin with the raw amino-acid sequence, 245 residues long: GTP cyclohydrolase 1 type 2 homolog (245 aa).

Positions 63, 64, 100, 213, and 217 each coordinate a divalent metal cation.

The protein belongs to the GTP cyclohydrolase I type 2/NIF3 family. As to quaternary structure, homohexamer.

The sequence is that of GTP cyclohydrolase 1 type 2 homolog from Archaeoglobus fulgidus (strain ATCC 49558 / DSM 4304 / JCM 9628 / NBRC 100126 / VC-16).